We begin with the raw amino-acid sequence, 46 residues long: Putative antitoxin VapB3 (46 aa).

The protein belongs to the UPF0165 family.

Possibly the antitoxin component of a type II toxin-antitoxin (TA) system. Its cognate toxin is VapC3 (Potential). The polypeptide is Putative antitoxin VapB3 (vapB3) (Pyrococcus furiosus (strain ATCC 43587 / DSM 3638 / JCM 8422 / Vc1)).